Here is an 889-residue protein sequence, read N- to C-terminus: DNA mismatch repair protein MutS (889 aa).

641–648 (GPNMAGKS) is an ATP binding site.

The protein belongs to the DNA mismatch repair MutS family.

This protein is involved in the repair of mismatches in DNA. It is possible that it carries out the mismatch recognition step. This protein has a weak ATPase activity. In Orientia tsutsugamushi (strain Boryong) (Rickettsia tsutsugamushi), this protein is DNA mismatch repair protein MutS.